A 208-amino-acid chain; its full sequence is NAD(P)H-quinone oxidoreductase subunit M, chloroplastic (208 aa).

The N-terminal 21 residues, 1-21 (MAATSSYTACTKFSMLGWIGG), are a transit peptide targeting the chloroplast. A compositionally biased stretch (low complexity) spans 37–49 (QQAEVEESQQVNA). Positions 37-70 (QQAEVEESQQVNAQEEEQEKMKQQGKQKLPRPVE) are disordered.

This sequence belongs to the NDH complex subunit M family. In terms of assembly, part of the chloroplast NDH complex, composed of a mixture of chloroplast and nucleus encoded subunits. Component of the NDH subcomplex A, at least composed of ndhH, ndhI, ndhJ, ndhK, ndhL, ndhM, ndhN and ndhO.

The protein localises to the plastid. The protein resides in the chloroplast thylakoid membrane. It carries out the reaction a plastoquinone + NADH + (n+1) H(+)(in) = a plastoquinol + NAD(+) + n H(+)(out). The catalysed reaction is a plastoquinone + NADPH + (n+1) H(+)(in) = a plastoquinol + NADP(+) + n H(+)(out). In terms of biological role, NDH shuttles electrons from NAD(P)H:plastoquinone, via FMN and iron-sulfur (Fe-S) centers, to quinones in the photosynthetic chain and possibly in a chloroplast respiratory chain. The immediate electron acceptor for the enzyme in this species is believed to be plastoquinone. Couples the redox reaction to proton translocation, and thus conserves the redox energy in a proton gradient. The polypeptide is NAD(P)H-quinone oxidoreductase subunit M, chloroplastic (Vitis vinifera (Grape)).